The sequence spans 211 residues: Pyridoxine/pyridoxamine 5'-phosphate oxidase (211 aa).

Substrate contacts are provided by residues 7–10 and Lys-65; that span reads RTDY. FMN is bound by residues 60–65, 75–76, Arg-81, and Lys-82; these read RILLIK and FT. Positions 122, 126, and 130 each coordinate substrate. FMN contacts are provided by residues 139–140 and Trp-183; that span reads QS. Residue 189 to 191 coordinates substrate; sequence RLH. Residue Arg-193 participates in FMN binding.

This sequence belongs to the pyridoxamine 5'-phosphate oxidase family. In terms of assembly, homodimer. The cofactor is FMN.

The enzyme catalyses pyridoxamine 5'-phosphate + O2 + H2O = pyridoxal 5'-phosphate + H2O2 + NH4(+). It carries out the reaction pyridoxine 5'-phosphate + O2 = pyridoxal 5'-phosphate + H2O2. The protein operates within cofactor metabolism; pyridoxal 5'-phosphate salvage; pyridoxal 5'-phosphate from pyridoxamine 5'-phosphate: step 1/1. It participates in cofactor metabolism; pyridoxal 5'-phosphate salvage; pyridoxal 5'-phosphate from pyridoxine 5'-phosphate: step 1/1. Its function is as follows. Catalyzes the oxidation of either pyridoxine 5'-phosphate (PNP) or pyridoxamine 5'-phosphate (PMP) into pyridoxal 5'-phosphate (PLP). The sequence is that of Pyridoxine/pyridoxamine 5'-phosphate oxidase from Janthinobacterium sp. (strain Marseille) (Minibacterium massiliensis).